Reading from the N-terminus, the 453-residue chain is Na(+)/H(+) antiporter NhaA 2 (453 aa).

The next 12 helical transmembrane spans lie at 23–43 (FLHI…AALI), 74–94 (LHFW…GMEI), 111–131 (LPMA…LSFG), 139–159 (GWAV…ALLG), 168–188 (VFLL…IAFF), 191–211 (GGLD…VIGL), 214–234 (IGVG…LGIL), 235–255 (LTGA…PVTA), 316–336 (VAFG…LSGV), 345–365 (WVMI…IVSV), 386–406 (IMLV…IANL), and 419–439 (LGVL…GVWS).

Belongs to the NhaA Na(+)/H(+) (TC 2.A.33) antiporter family.

The protein localises to the cell inner membrane. It catalyses the reaction Na(+)(in) + 2 H(+)(out) = Na(+)(out) + 2 H(+)(in). Its function is as follows. Na(+)/H(+) antiporter that extrudes sodium in exchange for external protons. This Pseudomonas putida (strain ATCC 47054 / DSM 6125 / CFBP 8728 / NCIMB 11950 / KT2440) protein is Na(+)/H(+) antiporter NhaA 2.